The primary structure comprises 222 residues: Latexin (222 aa).

In terms of domain architecture, Cystatin LXN-type 1 spans Met-1 to Lys-97. Residue Lys-55 is modified to N6-acetyllysine. An alpha-helical linker region spans residues Asn-98 to Leu-117. The 105-residue stretch at Glu-118–Glu-222 folds into the Cystatin LXN-type 2 domain.

It belongs to the protease inhibitor I47 (latexin) family. In terms of tissue distribution, highly enriched in macrophages.

Its subcellular location is the cytoplasm. Hardly reversible, non-competitive, and potent inhibitor of CPA1, CPA2 and CPA4. May play a role in inflammation. The sequence is that of Latexin (Lxn) from Mus musculus (Mouse).